A 218-amino-acid chain; its full sequence is Ribose-5-phosphate isomerase A (218 aa).

Substrate contacts are provided by residues 28-31, 81-84, and 94-97; these read TGST, DGAD, and KGGG. Residue E103 is the Proton acceptor of the active site. K121 is a binding site for substrate.

Belongs to the ribose 5-phosphate isomerase family. In terms of assembly, homodimer.

The enzyme catalyses aldehydo-D-ribose 5-phosphate = D-ribulose 5-phosphate. It participates in carbohydrate degradation; pentose phosphate pathway; D-ribose 5-phosphate from D-ribulose 5-phosphate (non-oxidative stage): step 1/1. Functionally, catalyzes the reversible conversion of ribose-5-phosphate to ribulose 5-phosphate. This chain is Ribose-5-phosphate isomerase A, found in Shewanella woodyi (strain ATCC 51908 / MS32).